A 440-amino-acid polypeptide reads, in one-letter code: Thymidine phosphorylase (440 aa).

It belongs to the thymidine/pyrimidine-nucleoside phosphorylase family. In terms of assembly, homodimer.

It catalyses the reaction thymidine + phosphate = 2-deoxy-alpha-D-ribose 1-phosphate + thymine. The protein operates within pyrimidine metabolism; dTMP biosynthesis via salvage pathway; dTMP from thymine: step 1/2. In terms of biological role, the enzymes which catalyze the reversible phosphorolysis of pyrimidine nucleosides are involved in the degradation of these compounds and in their utilization as carbon and energy sources, or in the rescue of pyrimidine bases for nucleotide synthesis. The sequence is that of Thymidine phosphorylase from Yersinia pestis.